A 308-amino-acid polypeptide reads, in one-letter code: V-type immunoglobulin domain-containing suppressor of T-cell activation (308 aa).

A signal peptide spans 1–32 (MGVPAVPEASSPRWGTLLLAIFLAASRGLVAA). Positions 33–167 (FKVTTPYSLY…RFYGSMELQV (135 aa)) constitute an Ig-like V-type domain. At 33–191 (FKVTTPYSLY…EQDSDSITAA (159 aa)) the chain is on the extracellular side. N49, N91, and N127 each carry an N-linked (GlcNAc...) asparagine glycan. C54 and C145 are joined by a disulfide. A helical transmembrane segment spans residues 192-212 (ALATGACIVGILCLPLILLLV). Residues 213-308 (YKQRQVASHR…VPDSPNSEAI (96 aa)) lie on the Cytoplasmic side of the membrane. Residues 230 to 308 (MDSNTQGIEN…VPDSPNSEAI (79 aa)) are disordered. Phosphoserine is present on S232.

Post-translationally, at the cell surface, may be cleaved by MMP14. N-glycosylated. As to expression, expressed in spleen, thymus, bone marrow, lymph node, and in T-cells within the lamina propria of the small intestine. Detected on CD4+ and CD8+ T-cells, bone marrow-derived dendritic cells (BMDCs), peritoneal macrophages, neutrophils, and natural killer (NK) cells. In spleen and lymph nodes, highly expressed on CD4+ T-cell populations, and at lower levels on CD8+ T-cells. In thymus, has low expression on CD4+ cells and CD8+ cells, and not detected on CD4+CD8+ cells. Expressed in splenic and peritoneal CD11b cells. Not detected in most B cells and NK cells (at protein level). Also detected at lower levels in non-hematopoeitic tissues such as heart, brain, lung, kidney, muscle, ovary, and testis.

The protein localises to the cell membrane. In terms of biological role, immunoregulatory receptor which inhibits the T-cell response. May promote differentiation of embryonic stem cells, by inhibiting BMP4 signaling. May stimulate MMP14-mediated MMP2 activation. This Mus musculus (Mouse) protein is V-type immunoglobulin domain-containing suppressor of T-cell activation.